The sequence spans 86 residues: Superoxide dismutase [Cu-Zn] (86 aa).

The tract at residues 1–26 is disordered; that stretch reads AKEKGGKLTAGLAAGGHWNPNKAPHH. The span at 7 to 16 shows a compositional bias: low complexity; it reads KLTAGLAAGG. His-17 is a binding site for Cu cation. The Zn(2+) site is built by His-17, His-26, His-35, and Asp-38. Residue His-73 participates in Cu cation binding.

Belongs to the Cu-Zn superoxide dismutase family. Homodimer. Cu cation is required as a cofactor. The cofactor is Zn(2+).

Its subcellular location is the periplasm. The catalysed reaction is 2 superoxide + 2 H(+) = H2O2 + O2. Destroys radicals which are normally produced within the cells and which are toxic to biological systems. This is Superoxide dismutase [Cu-Zn] (sodC) from Mannheimia haemolytica (Pasteurella haemolytica).